A 102-amino-acid chain; its full sequence is NADH-quinone oxidoreductase subunit K (102 aa).

3 consecutive transmembrane segments (helical) span residues 5 to 25, 30 to 50, and 63 to 83; these read ALTG…FGVL, ILFQ…AFIA, and MFVL…ALFL.

This sequence belongs to the complex I subunit 4L family. As to quaternary structure, NDH-1 is composed of 14 different subunits. Subunits NuoA, H, J, K, L, M, N constitute the membrane sector of the complex.

The protein localises to the cell inner membrane. The catalysed reaction is a quinone + NADH + 5 H(+)(in) = a quinol + NAD(+) + 4 H(+)(out). In terms of biological role, NDH-1 shuttles electrons from NADH, via FMN and iron-sulfur (Fe-S) centers, to quinones in the respiratory chain. The immediate electron acceptor for the enzyme in this species is believed to be ubiquinone. Couples the redox reaction to proton translocation (for every two electrons transferred, four hydrogen ions are translocated across the cytoplasmic membrane), and thus conserves the redox energy in a proton gradient. The polypeptide is NADH-quinone oxidoreductase subunit K (Rhodopseudomonas palustris (strain BisB18)).